A 350-amino-acid chain; its full sequence is Small ribosomal subunit biogenesis GTPase RsgA (350 aa).

Over residues 1–17 (MSKNKLSKGQQRRVNAN) the composition is skewed to polar residues. Positions 1–33 (MSKNKLSKGQQRRVNANHQRRLKTSKEKPDYDD) are disordered. The CP-type G domain occupies 104–273 (TSVLTRPDFY…VIDSPGVREF (170 aa)). GTP is bound by residues 160-163 (NKID) and 214-222 (GQSGVGKSS). Positions 297, 302, 304, and 310 each coordinate Zn(2+).

This sequence belongs to the TRAFAC class YlqF/YawG GTPase family. RsgA subfamily. Monomer. Associates with 30S ribosomal subunit, binds 16S rRNA. It depends on Zn(2+) as a cofactor.

The protein resides in the cytoplasm. In terms of biological role, one of several proteins that assist in the late maturation steps of the functional core of the 30S ribosomal subunit. Helps release RbfA from mature subunits. May play a role in the assembly of ribosomal proteins into the subunit. Circularly permuted GTPase that catalyzes slow GTP hydrolysis, GTPase activity is stimulated by the 30S ribosomal subunit. This Shigella flexneri protein is Small ribosomal subunit biogenesis GTPase RsgA.